The following is a 138-amino-acid chain: uncharacterized protein (138 aa).

This is an uncharacterized protein from Archaeoglobus fulgidus (strain ATCC 49558 / DSM 4304 / JCM 9628 / NBRC 100126 / VC-16).